The sequence spans 814 residues: MTARTPNRATGAPENANPTVRDQTQQDQGERSESPAIPSLTNKKRPRSQPDNTSSPACNQCRTRKIRCDRQQPKCSNCRRADVECDFATTPKRVDRTKQLLNDFSGVVARLDRVDNSLAKLSEQLQQQQPCRCSHSPVPSQVDNPWGASEPAAIYTTYTPKSSTSCRSPHLMEVDGSEDCDPEIPNGDLVDFDQGGQRLLDYPAALSLFKNLQRQITRWLTKDVPQGSELWQVIAQQPGFKASLEYQLEQFPFGGLCHEPVIVSDHRPISTPPRYLLELSLDGFLRHINIHTPIFDDSSLGKAIDTHYQSLSAGTGDAWALTFTNIIILTVALDARVARATASHLVSMNDDMLPSFLKNCDRALADLNRFTAPCLINVQVLLTLVRMVINFPEAYIRALVAREFYGSVVFEKVCQAVCQVARSTGLHRAHGARSMRWEKMPERERLFWVVYTMDKQRAFLTGQPCDLYLFDSDIQLRSCGERAPFPLRLNAAYVHMMTIWEQIFINLYSSRAVLAGAADRSRQVQQLWGSLNEWNIKYHALLSSPILEKMADLAPMQLELKYCFMVSQVLVHRCDRNARSQQRYRDPARSALKLIAQVAGDHRSITLARCAVLARMFRNYPLVAVHDLFSFCLTDGEPDSTEDGQLIHETRRHLELLHYADFPQAYFARLEVGLKWCTDMLDTIKDCLSRSAVAGDWGPMDGSSTGLSDRTPPSESELSSIPPDAWASLNLPMSRDEMLCGLSPSVPSEGLLDPQFSAFGLTTSSTGDSTVPAFAQGGDNPAVTMHPSMWVPAEVPCNSSEPLFDPEFTRSIMS.

Disordered stretches follow at residues 1–59 (MTAR…PACN) and 699–723 (PMDG…SIPP). 2 stretches are compositionally biased toward polar residues: residues 16–27 (ANPTVRDQTQQD) and 49–59 (QPDNTSSPACN). Residues 58-85 (CNQCRTRKIRCDRQQPKCSNCRRADVEC) constitute a DNA-binding region (zn(2)-C6 fungal-type). Low complexity predominate over residues 713–723 (PSESELSSIPP).

It localises to the nucleus. In terms of biological role, transcription factor that regulates the expression of the gene cluster that mediates the biosynthesis of oryzines, natural products with an unusual maleidride backbone. This is Transcription factor oryO from Aspergillus oryzae (strain ATCC 42149 / RIB 40) (Yellow koji mold).